The primary structure comprises 506 residues: CDK5 regulatory subunit-associated protein 3 (506 aa).

3 consecutive short sequence motifs (shuffled ATG8-binding motif) follow at residues 267 to 270 (IDWG), 292 to 295 (IDWG), and 310 to 313 (IDWG). The tract at residues 269 to 506 (WGDFGVEAVS…RPVNLMGTSL (238 aa)) is required for interaction with UFL1 and mediates interaction with CHEK1. Positions 355 to 370 (DELMELEIFLARRAVE) are RPL10a-binding domain (RBD). Lysine 450 participates in a covalent cross-link: Glycyl lysine isopeptide (Lys-Gly) (interchain with G-Cter in SUMO2).

This sequence belongs to the CDK5RAP3 family. As to quaternary structure, substrate adapter component of the UFM1 ribosome E3 ligase (UREL) complex, composed of UFL1, DDRGK1 and CDK5RAP3. Interaction with UFL1 anchors CDK5RAP3 in the cytoplasm, preventing its translocation to the nucleus which allows expression of the CCND1 cyclin and progression of cells through the G1/S transition. Interacts with ATG8 family proteins MAP1LC3A, MAP1LC3B, GABARAP, GABARAPL1 and GABARAPL2. Interacts with CDK5R1; competes with CDK5RAP1 and CDK5RAP2. Interacts with RELA. Interacts with CHEK1; may negatively regulate CHEK1 and thereby stimulate entry into mitosis. Interacts with CDKN2A/ARF and MDM2; forms a ternary complex involved in regulation of p53/TP53. Interacts with MAPK14. Interacts with CCNB1. Interacts with TUBG1; may regulate CDK5RAP3 in mitotic G2/M transition checkpoint. Post-translationally, may be phosphorylated by CDK5. In terms of processing, ubiquitinated. Probably triggers proteasomal degradation and is negatively regulated by UFL1. May be ufmylated. Post-translationally, cleaved by caspases early during apoptosis, the resulting peptides may play a role in rupture of the nuclear envelope.

It is found in the endoplasmic reticulum membrane. It localises to the cytoplasm. The protein resides in the nucleus. Its subcellular location is the cytoskeleton. The protein localises to the microtubule organizing center. It is found in the centrosome. Functionally, substrate adapter of E3 ligase complexes mediating ufmylation, the covalent attachment of the ubiquitin-like modifier UFM1 to substrate proteins, and which is involved in various processes, such as ribosome recycling and reticulophagy (also called ER-phagy). As part of the UREL complex, plays a key role in ribosome recycling by promoting mono-ufmylation of RPL26/uL24 subunit of the 60S ribosome. Ufmylation of RPL26/uL24 occurs on free 60S ribosomes following ribosome dissociation: it weakens the junction between post-termination 60S subunits and SEC61 translocons, promoting release and recycling of the large ribosomal subunit from the endoplasmic reticulum membrane. Ufmylation of RPL26/uL24 and subsequent 60S ribosome recycling either take place after normal termination of translation or after ribosome stalling during cotranslational translocation at the endoplasmic reticulum. Within the UREL complex, CDK5RAP3 acts as a substrate adapter that constrains UFL1 ligase activity to mono-ufmylate RPL26/uL24 at 'Lys-134'. The UREL complex is also involved in reticulophagy in response to endoplasmic reticulum stress by promoting ufmylation of proteins such as CYB5R3, thereby promoting lysosomal degradation of ufmylated proteins. Also acts as a regulator of transcription: negatively regulates NF-kappa-B-mediated gene transcription through the control of RELA phosphorylation. Also regulates mitotic G2/M transition checkpoint and mitotic G2 DNA damage checkpoint. Through its interaction with CDKN2A/ARF and MDM2 may induce MDM2-dependent p53/TP53 ubiquitination, stabilization and activation in the nucleus, thereby promoting G1 cell cycle arrest and inhibition of cell proliferation. May also play a role in the rupture of the nuclear envelope during apoptosis. May regulate MAPK14 activity by regulating its dephosphorylation by PPM1D/WIP1. Required for liver development. This is CDK5 regulatory subunit-associated protein 3 from Pongo abelii (Sumatran orangutan).